The chain runs to 357 residues: Acyl-coenzyme A diphosphatase NUDT19 (357 aa).

The region spanning 10 to 242 (AATVMLAAGW…IWLAPPQFYE (233 aa)) is the Nudix hydrolase domain. Residues 72 to 93 (PRFGLGPEPPRQPPFPGLSHGD) are disordered. Residues 78–87 (PEPPRQPPFP) are compositionally biased toward pro residues. Positions 97 to 118 (AALPDDVALRICAIREAFEEAG) match the Nudix box motif. Mg(2+) is bound by residues Glu112 and Glu116. The residue at position 300 (Lys300) is an N6-succinyllysine. Residues 355-357 (AHL) carry the Microbody targeting signal motif.

It belongs to the Nudix hydrolase family. In terms of assembly, monomer. Requires Mg(2+) as cofactor. The cofactor is Mn(2+). Highly expressed in the kidneys, with lower levels in skeletal muscle and brain (at protein level).

The protein resides in the peroxisome. It carries out the reaction an acyl-CoA + H2O = an acyl-4'-phosphopantetheine + adenosine 3',5'-bisphosphate + 2 H(+). The enzyme catalyses CoA + H2O = (R)-4'-phosphopantetheine + adenosine 3',5'-bisphosphate + 2 H(+). It catalyses the reaction hexanoyl-CoA + H2O = hexanoyl-4'-phosphopantetheine + adenosine 3',5'-bisphosphate + 2 H(+). The catalysed reaction is octanoyl-CoA + H2O = S-octanoyl-4'-phosphopantetheine + adenosine 3',5'-bisphosphate + 2 H(+). It carries out the reaction butanoyl-CoA + H2O = S-butanoyl-4'-phosphopantetheine + adenosine 3',5'-bisphosphate + 2 H(+). The enzyme catalyses propanoyl-CoA + H2O = propanoyl-4'-phosphopantetheine + adenosine 3',5'-bisphosphate + 2 H(+). It catalyses the reaction malonyl-CoA + H2O = malonyl-4'-phosphopantetheine + adenosine 3',5'-bisphosphate + 2 H(+). The catalysed reaction is succinyl-CoA + H2O = succinyl-4'-phosphopantetheine + adenosine 3',5'-bisphosphate + 2 H(+). It carries out the reaction choloyl-CoA + H2O = S-choloyl-4'-phosphopantetheine + adenosine 3',5'-bisphosphate + 2 H(+). The enzyme catalyses 4,8-dimethylnonanoyl-CoA + H2O = S-(4,8-dimethylnonanoyl)-4'-phosphopantetheine + adenosine 3',5'-bisphosphate + 2 H(+). It catalyses the reaction (9Z,12Z,15Z)-octadecatrienoyl-CoA + H2O = S-(9Z,12Z,15Z-octadecatrienoyl)-4'-phosphopantetheine + adenosine 3',5'-bisphosphate + 2 H(+). The catalysed reaction is (9Z,12Z)-octadecadienoyl-CoA + H2O = S-(9Z,12Z-octadecadienoyl)-4'-phosphopantetheine + adenosine 3',5'-bisphosphate + 2 H(+). It carries out the reaction (9Z)-hexadecenoyl-CoA + H2O = S-(9Z-hexadecenoyl)-4'-phosphopantetheine + adenosine 3',5'-bisphosphate + 2 H(+). The enzyme catalyses (9Z)-tetradecenoyl-CoA + H2O = S-(9Z-tetradecenoyl)-4'-phosphopantetheine + adenosine 3',5'-bisphosphate + 2 H(+). It catalyses the reaction (6Z)-octenoyl-CoA + H2O = S-(6Z-octenoyl)-4'-phosphopantetheine + adenosine 3',5'-bisphosphate + 2 H(+). The catalysed reaction is hexadecanoyl-CoA + H2O = S-hexadecanoyl-4'-phosphopantetheine + adenosine 3',5'-bisphosphate + 2 H(+). It carries out the reaction tetradecanoyl-CoA + H2O = tetradecanoyl-4'-phosphopantetheine + adenosine 3',5'-bisphosphate + 2 H(+). The enzyme catalyses dodecanoyl-CoA + H2O = S-dodecanoyl-4'-phosphopantetheine + adenosine 3',5'-bisphosphate + 2 H(+). It catalyses the reaction a 5'-end CoA-ribonucleoside in mRNA + H2O = a 5'-end phospho-adenosine-phospho-ribonucleoside in mRNA + (R)-4'-phosphopantetheine + 2 H(+). Inhibited by chenodeoxycholic acid (CDCA) and its conjugated derivatives, taurochenodeoxycholic acid and glycochenodeoxycholic acid. Inhibited by fluoride. In terms of biological role, fatty acyl-coenzyme A (CoA) diphosphatase that hydrolyzes fatty acyl-CoA to yield acyl-4'-phosphopantetheine and adenosine 3',5'-bisphosphate. Mediates the hydrolysis of a wide range of CoA esters, including choloyl-CoA and branched-chain fatty-acyl-CoA esters and at low substrate concentrations medium and long-chain fatty-acyl-CoA esters are the primary substrates. Highest activity seen with medium-chain acyl-CoA esters and higher rates of activity seen with the unsaturated acyl-CoA esters compared with the saturated esters. Exhibits decapping activity towards dpCoA-capped RNAs in vitro. The polypeptide is Acyl-coenzyme A diphosphatase NUDT19 (Nudt19) (Mus musculus (Mouse)).